The sequence spans 517 residues: MSEQVALNPSEISELIRKKIDQFSVVSEARNEGTIVSLKDGIVRLHGLADVMAGEMIEFPGGVYGLALNLKRDSVGAVILGDSSTLAEGQKGKCTGRILEVPVGKGLLGRVVDALGNPIDGKGPIESSGMSPIEKVAPGVVTRKSIDQPVQTGLKAIDAMIPVGRGQRELIIGDRQTGKTAIAIDAIINQKGTGVKCVYVAIGQKASSVASIVRKLEEHGALEHTIVVVAGASDSAALQYIAPYAGCTMGEYFMERGEDALIVYDDLTKQAWAYRQISLLLRRPPGREAYPGDIFYLHSRLLERAARINADEVEKLTNGEVKGKTGSLTALPIIETQAGDVSAFVPTNVISITDGQIFLDVDLFNSGVRPAINSGLSVSRVGGAAQTKIMKKLGGGTRLALAQFRELEAFSQFASDLDDATRKQLERGQRITELMKQKQYSPLTVAEMGVSLFVVEKGYLDDVPVNEISSFEASLHDYMRSTHAALLHAINEAGAYDNEIEAKLKKAVEEFKNTGSW.

Position 173-180 (173-180) interacts with ATP; sequence GDRQTGKT.

It belongs to the ATPase alpha/beta chains family. F-type ATPases have 2 components, CF(1) - the catalytic core - and CF(0) - the membrane proton channel. CF(1) has five subunits: alpha(3), beta(3), gamma(1), delta(1), epsilon(1). CF(0) has three main subunits: a(1), b(2) and c(9-12). The alpha and beta chains form an alternating ring which encloses part of the gamma chain. CF(1) is attached to CF(0) by a central stalk formed by the gamma and epsilon chains, while a peripheral stalk is formed by the delta and b chains.

It is found in the cell inner membrane. The catalysed reaction is ATP + H2O + 4 H(+)(in) = ADP + phosphate + 5 H(+)(out). In terms of biological role, produces ATP from ADP in the presence of a proton gradient across the membrane. The alpha chain is a regulatory subunit. This chain is ATP synthase subunit alpha 2, found in Legionella pneumophila (strain Corby).